The sequence spans 210 residues: MTLAKDIASHLLKIQAVYLKPEEPFTWASGIKSPIYTDNRVTLAYPETRTLIENGFVDAIKEAFPEVEVIAGTATAGIPHGAIIADKMNLPFAYIRSKPKDHGAGNQIEGRVAQGQKMVVVEDLISTGGSVLEAVAAAKREGADVLGVVAIFSYQLPKADKNFADAGVKLVTLSNYSELIHLAQEEGYITPEGLDLLKRFKEDQENWQEG.

Residues arginine 96, lysine 100, histidine 102, and glutamate 122–serine 130 each bind 5-phospho-alpha-D-ribose 1-diphosphate. Serine 126 is an orotate binding site.

It belongs to the purine/pyrimidine phosphoribosyltransferase family. PyrE subfamily. Homodimer. It depends on Mg(2+) as a cofactor.

The catalysed reaction is orotidine 5'-phosphate + diphosphate = orotate + 5-phospho-alpha-D-ribose 1-diphosphate. It functions in the pathway pyrimidine metabolism; UMP biosynthesis via de novo pathway; UMP from orotate: step 1/2. Functionally, catalyzes the transfer of a ribosyl phosphate group from 5-phosphoribose 1-diphosphate to orotate, leading to the formation of orotidine monophosphate (OMP). The protein is Orotate phosphoribosyltransferase (pyrE) of Streptococcus pneumoniae serotype 19F (strain G54).